Reading from the N-terminus, the 799-residue chain is Mitochondrial intermediate peptidase (799 aa).

Zn(2+) is bound at residue histidine 562. Glutamate 563 is an active-site residue. Residues histidine 566 and histidine 569 each coordinate Zn(2+).

It belongs to the peptidase M3 family. It depends on Zn(2+) as a cofactor.

The protein resides in the mitochondrion matrix. It catalyses the reaction Release of an N-terminal octapeptide as second stage of processing of some proteins imported into the mitochondrion.. Functionally, cleaves proteins, imported into the mitochondrion, to their mature size. While most mitochondrial precursor proteins are processed to the mature form in one step by mitochondrial processing peptidase (MPP), the sequential cleavage by MIP of an octapeptide after initial processing by MPP is a required step for a subgroup of nuclear-encoded precursor proteins destined for the matrix or the inner membrane. This is Mitochondrial intermediate peptidase (oct1) from Aspergillus niger (strain ATCC MYA-4892 / CBS 513.88 / FGSC A1513).